A 296-amino-acid chain; its full sequence is Putative peptide transport system permease protein BruAb2_1032 (296 aa).

The next 6 helical transmembrane spans lie at 35–55, 97–117, 131–151, 205–225, 229–249, and 260–280; these read IGLV…WITN, LWIG…IGIA, VMDA…SAAL, ILPN…AYAI, ATLS…GSIV, and WWIM…INLI. Residues 97–281 enclose the ABC transmembrane type-1 domain; the sequence is LWIGLTVAVL…ISALAINLIG (185 aa).

Belongs to the binding-protein-dependent transport system permease family. In terms of assembly, the complex is composed of two ATP-binding proteins (BruAb2_1033 and BruAb2_1034), two transmembrane proteins (BruAb2_1031 and BruAb2_1032) and a solute-binding protein (BruAb2_1030).

The protein resides in the cell inner membrane. Probably part of an ABC transporter complex that could be involved in peptide import. Probably responsible for the translocation of the substrate across the membrane. The polypeptide is Putative peptide transport system permease protein BruAb2_1032 (Brucella abortus biovar 1 (strain 9-941)).